The primary structure comprises 157 residues: uncharacterized protein (157 aa).

In terms of domain architecture, N-acetyltransferase spans 9–146 (LLINYKTLDE…GDFYVWHPET (138 aa)).

This is an uncharacterized protein from Bacillus cereus (strain ZK / E33L).